Reading from the N-terminus, the 158-residue chain is 6,7-dimethyl-8-ribityllumazine synthase (158 aa).

5-amino-6-(D-ribitylamino)uracil is bound by residues Phe22, 56-58 (ALE), and 80-82 (VVI). 85 to 86 (ET) is a binding site for (2S)-2-hydroxy-3-oxobutyl phosphate. His88 serves as the catalytic Proton donor. 5-amino-6-(D-ribitylamino)uracil is bound at residue Asn113. Arg127 is a binding site for (2S)-2-hydroxy-3-oxobutyl phosphate.

The protein belongs to the DMRL synthase family.

The catalysed reaction is (2S)-2-hydroxy-3-oxobutyl phosphate + 5-amino-6-(D-ribitylamino)uracil = 6,7-dimethyl-8-(1-D-ribityl)lumazine + phosphate + 2 H2O + H(+). Its pathway is cofactor biosynthesis; riboflavin biosynthesis; riboflavin from 2-hydroxy-3-oxobutyl phosphate and 5-amino-6-(D-ribitylamino)uracil: step 1/2. Functionally, catalyzes the formation of 6,7-dimethyl-8-ribityllumazine by condensation of 5-amino-6-(D-ribitylamino)uracil with 3,4-dihydroxy-2-butanone 4-phosphate. This is the penultimate step in the biosynthesis of riboflavin. The protein is 6,7-dimethyl-8-ribityllumazine synthase of Neisseria meningitidis serogroup C (strain 053442).